The following is a 208-amino-acid chain: Thymidylate kinase (208 aa).

Position 11-18 (11-18 (GTEGVGKT)) interacts with ATP.

This sequence belongs to the thymidylate kinase family.

It carries out the reaction dTMP + ATP = dTDP + ADP. Its function is as follows. Phosphorylation of dTMP to form dTDP in both de novo and salvage pathways of dTTP synthesis. In Psychrobacter sp. (strain PRwf-1), this protein is Thymidylate kinase.